A 614-amino-acid polypeptide reads, in one-letter code: Vitamin B12 transporter BtuB (614 aa).

Residues 1 to 20 (MIKKATLLTAFSVTAFSAWA) form the signal peptide. The TonB box motif lies at 26-33 (DTLVVTAN). The 115-residue stretch at 38-152 (PRSAVLAPVT…IGGVVNIITT (115 aa)) folds into the TBDR plug domain. Residues serine 85, asparagine 92, and 110–111 (VS) each bind cyanocob(III)alamin. The TBDR beta-barrel domain maps to 155-614 (NPGTELTAGW…EYTLSGSYTF (460 aa)). The next 3 beta stranded transmembrane spans lie at 158-165 (TELTAGWG), 169-178 (YQNYDISTQQ), and 184-195 (TRATLIGDYEYT). 4 residues coordinate Ca(2+): aspartate 199, glutamine 211, aspartate 213, and aspartate 215. The next 2 beta stranded transmembrane spans lie at 217-227 (FLSKTLYGALE) and 232-248 (DRWS…NRTD). Ca(2+)-binding residues include tyrosine 249 and aspartate 250. Alanine 251 contacts cyanocob(III)alamin. Aspartate 261 provides a ligand contact to Ca(2+). Beta stranded transmembrane passes span 263-277 (RKLY…LRFN), 279-296 (ERIQ…KDYN), 309-325 (TLDE…NSVV), 328-337 (HGNVGAGVDW), 353-369 (YDQR…QQLG), 371-381 (FTLEAAARSDD), 385-400 (FGRH…WEFI), 403-417 (YRFI…KAPN), 434-443 (KSKQWEGAFE), 449-458 (VSWRISGYRN), 473-490 (YYNE…TANF), 494-509 (PLTH…ARNA), 517-529 (RRSK…QLDW), and 535-550 (DWGV…YDSD). Threonine 309 serves as a coordination point for cyanocob(III)alamin. Residue arginine 517 participates in cyanocob(III)alamin binding. Residue tyrosine 551 coordinates cyanocob(III)alamin. A run of 3 beta stranded transmembrane segments spans residues 558–572 (TVKM…LTVA), 585–596 (IANLFDKDYETV), and 602–614 (AGRE…SYTF). The TonB C-terminal box motif lies at 597–614 (YGYQTAGREYTLSGSYTF).

This sequence belongs to the TonB-dependent receptor family. BtuB (TC 1.B.14.3.1) subfamily.

The protein resides in the cell outer membrane. Functionally, involved in the active translocation of vitamin B12 (cyanocobalamin) across the outer membrane to the periplasmic space. It derives its energy for transport by interacting with the trans-periplasmic membrane protein TonB. This is Vitamin B12 transporter BtuB from Salmonella choleraesuis (strain SC-B67).